A 170-amino-acid chain; its full sequence is Peptide deformylase (170 aa).

Fe cation-binding residues include C94 and H136. The active site involves E137. H140 is a Fe cation binding site.

It belongs to the polypeptide deformylase family. Fe(2+) serves as cofactor.

The enzyme catalyses N-terminal N-formyl-L-methionyl-[peptide] + H2O = N-terminal L-methionyl-[peptide] + formate. Removes the formyl group from the N-terminal Met of newly synthesized proteins. Requires at least a dipeptide for an efficient rate of reaction. N-terminal L-methionine is a prerequisite for activity but the enzyme has broad specificity at other positions. This is Peptide deformylase from Stenotrophomonas maltophilia (strain R551-3).